A 240-amino-acid chain; its full sequence is MVDKKEPASGWPILKGEYEVGDVKGCVAVITCASHLPGKPVLDAGAAITGSCKTENLGIEKVVAHVISNPNIRYLVVTGAEVKGHVTGQAMLSIHANGVKEHRIVGAVGAIPYVENLNDDAVARFQQQIETVNLLDTEDMGAITAKVRELVAKDPGAFDAEPMVVEISEEGEEEEEGGVVRPVSGEIAVIRSRLKAIEARMLDIGNLNKFHSGVHAGKIEGAMIGLTVTISLLGLLLLGR.

At 1–218 (MVDKKEPASG…KFHSGVHAGK (218 aa)) the chain is on the cytoplasmic side. Histidine 85 contributes to the 5-hydroxybenzimidazolylcob(I)amide binding site. Residues 219 to 239 (IEGAMIGLTVTISLLGLLLLG) form a helical membrane-spanning segment. Residue arginine 240 is a topological domain, extracellular.

This sequence belongs to the MtrA family. In terms of assembly, the complex is composed of 8 subunits; MtrA, MtrB, MtrC, MtrD, MtrE, MtrF, MtrG and MtrH. Requires 5-hydroxybenzimidazolylcob(I)amide as cofactor.

The protein resides in the cell membrane. It catalyses the reaction 5-methyl-5,6,7,8-tetrahydromethanopterin + coenzyme M + 2 Na(+)(in) = 5,6,7,8-tetrahydromethanopterin + methyl-coenzyme M + 2 Na(+)(out). The protein operates within one-carbon metabolism; methanogenesis from CO(2); methyl-coenzyme M from 5,10-methylene-5,6,7,8-tetrahydromethanopterin: step 2/2. In terms of biological role, part of a complex that catalyzes the formation of methyl-coenzyme M and tetrahydromethanopterin from coenzyme M and methyl-tetrahydromethanopterin. This is an energy-conserving, sodium-ion translocating step. The sequence is that of Tetrahydromethanopterin S-methyltransferase subunit A from Methanosarcina acetivorans (strain ATCC 35395 / DSM 2834 / JCM 12185 / C2A).